A 247-amino-acid chain; its full sequence is Small ribosomal subunit protein uS2 (247 aa).

This sequence belongs to the universal ribosomal protein uS2 family.

The chain is Small ribosomal subunit protein uS2 from Pseudomonas syringae pv. syringae (strain B728a).